The chain runs to 316 residues: Phospho-N-acetylmuramoyl-pentapeptide-transferase (316 aa).

10 helical membrane-spanning segments follow: residues 5-25 (IIFA…FFIP), 52-72 (TMGG…FSPW), 76-96 (LFIL…DDFL), 116-136 (FLLA…EIIV), 145-165 (LANF…NSVN), 172-192 (GLAA…ALFL), 195-212 (VTYG…LGFL), 221-241 (VFMG…VALL), 244-264 (LPLI…SVIL), and 296-316 (VVYS…YSLS).

This sequence belongs to the glycosyltransferase 4 family. MraY subfamily. Mg(2+) serves as cofactor.

It is found in the cell membrane. It carries out the reaction UDP-N-acetyl-alpha-D-muramoyl-L-alanyl-gamma-D-glutamyl-meso-2,6-diaminopimeloyl-D-alanyl-D-alanine + di-trans,octa-cis-undecaprenyl phosphate = di-trans,octa-cis-undecaprenyl diphospho-N-acetyl-alpha-D-muramoyl-L-alanyl-D-glutamyl-meso-2,6-diaminopimeloyl-D-alanyl-D-alanine + UMP. The protein operates within cell wall biogenesis; peptidoglycan biosynthesis. In terms of biological role, catalyzes the initial step of the lipid cycle reactions in the biosynthesis of the cell wall peptidoglycan: transfers peptidoglycan precursor phospho-MurNAc-pentapeptide from UDP-MurNAc-pentapeptide onto the lipid carrier undecaprenyl phosphate, yielding undecaprenyl-pyrophosphoryl-MurNAc-pentapeptide, known as lipid I. The polypeptide is Phospho-N-acetylmuramoyl-pentapeptide-transferase (Caldanaerobacter subterraneus subsp. tengcongensis (strain DSM 15242 / JCM 11007 / NBRC 100824 / MB4) (Thermoanaerobacter tengcongensis)).